A 118-amino-acid polypeptide reads, in one-letter code: Small ribosomal subunit protein uS13 (118 aa).

Positions 94–118 (GLPVRGQRTKTNARTRKGPRKPIKK) are disordered.

Belongs to the universal ribosomal protein uS13 family. In terms of assembly, part of the 30S ribosomal subunit. Forms a loose heterodimer with protein S19. Forms two bridges to the 50S subunit in the 70S ribosome.

Functionally, located at the top of the head of the 30S subunit, it contacts several helices of the 16S rRNA. In the 70S ribosome it contacts the 23S rRNA (bridge B1a) and protein L5 of the 50S subunit (bridge B1b), connecting the 2 subunits; these bridges are implicated in subunit movement. Contacts the tRNAs in the A and P-sites. The protein is Small ribosomal subunit protein uS13 of Tolumonas auensis (strain DSM 9187 / NBRC 110442 / TA 4).